Consider the following 319-residue polypeptide: Acetyl-coenzyme A carboxylase carboxyl transferase subunit alpha (319 aa).

Positions 35-296 constitute a CoA carboxyltransferase C-terminal domain; the sequence is NIDEEVHRLR…KAQLLADLAD (262 aa).

The protein belongs to the AccA family. As to quaternary structure, acetyl-CoA carboxylase is a heterohexamer composed of biotin carboxyl carrier protein (AccB), biotin carboxylase (AccC) and two subunits each of ACCase subunit alpha (AccA) and ACCase subunit beta (AccD).

The protein resides in the cytoplasm. The catalysed reaction is N(6)-carboxybiotinyl-L-lysyl-[protein] + acetyl-CoA = N(6)-biotinyl-L-lysyl-[protein] + malonyl-CoA. It participates in lipid metabolism; malonyl-CoA biosynthesis; malonyl-CoA from acetyl-CoA: step 1/1. In terms of biological role, component of the acetyl coenzyme A carboxylase (ACC) complex. First, biotin carboxylase catalyzes the carboxylation of biotin on its carrier protein (BCCP) and then the CO(2) group is transferred by the carboxyltransferase to acetyl-CoA to form malonyl-CoA. In Shigella sonnei (strain Ss046), this protein is Acetyl-coenzyme A carboxylase carboxyl transferase subunit alpha.